Reading from the N-terminus, the 302-residue chain is Nucleotide-binding protein Bcenmc03_2806 (302 aa).

8–15 provides a ligand contact to ATP; that stretch reads GISGSGKS. 57 to 60 serves as a coordination point for GTP; it reads DARS.

The protein belongs to the RapZ-like family.

In terms of biological role, displays ATPase and GTPase activities. The polypeptide is Nucleotide-binding protein Bcenmc03_2806 (Burkholderia orbicola (strain MC0-3)).